Consider the following 408-residue polypeptide: Histone acetyltransferase type B subunit 2 (408 aa).

5 WD repeats span residues 120–160 (KHEQ…KDHG), 167–207 (YHKE…NKSP), 213–253 (VHTD…AIQK), 255–295 (SVSS…KPLH), and 299–339 (GHED…AEQQ). Positions 341–345 (DDAYD) are interaction with the histone H4 N-terminus. A WD 6 repeat occupies 356–396 (GHRSPVNEFSHNSNVPWLMCSVEEENVLQIWKPANKIVRPP).

The protein belongs to the WD repeat RBAP46/RBAP48/MSI1 family. As to quaternary structure, component of the HAT-B complex composed of at least HAT1 and HAT2. The HAT-B complex binds to histone H4 tail.

The protein localises to the cytoplasm. It localises to the nucleus. Regulatory subunit of the histone acetylase B (HAT-B) complex. The complex acetylates 'Lys-12' of histone H4 which is required for telomeric silencing. This is Histone acetyltransferase type B subunit 2 (HAT2) from Kluyveromyces lactis (strain ATCC 8585 / CBS 2359 / DSM 70799 / NBRC 1267 / NRRL Y-1140 / WM37) (Yeast).